We begin with the raw amino-acid sequence, 426 residues long: 6-Hydroxy-7-prenyldeoxybrevianamide E synthase notC' (426 aa).

Glutamate 94 is a binding site for substrate. Residues arginine 105, lysine 191, and tyrosine 193 each contribute to the dimethylallyl diphosphate site. Tyrosine 195 lines the substrate pocket. Dimethylallyl diphosphate is bound by residues lysine 267, tyrosine 269, glutamine 352, tyrosine 354, tyrosine 418, and tyrosine 422.

Belongs to the tryptophan dimethylallyltransferase family.

It carries out the reaction 6-hydroxydeoxybrevianamide E + dimethylallyl diphosphate = notoamide S + diphosphate. Its pathway is alkaloid biosynthesis. Its function is as follows. Prenyltransferase; part of the gene cluster that mediates the biosynthesis of notoamide, a fungal indole alkaloid that belongs to a family of natural products containing a characteristic bicyclo[2.2.2]diazaoctane core. The first step of notoamide biosynthesis involves coupling of L-proline and L-tryptophan by the bimodular NRPS notE', to produce cyclo-L-tryptophan-L-proline called brevianamide F. The reverse prenyltransferase notF' then acts as a deoxybrevianamide E synthase and converts brevianamide F to deoxybrevianamide E via reverse prenylation at C-2 of the indole ring leading to the bicyclo[2.2.2]diazaoctane core. Deoxybrevianamide E is further hydroxylated at C-6 of the indole ring, likely catalyzed by the cytochrome P450 monooxygenase notG', to yield 6-hydroxy-deoxybrevianamide E. 6-hydroxy-deoxybrevianamide E is a specific substrate of the prenyltransferase notC' for normal prenylation at C-7 to produce 6-hydroxy-7-prenyl-deoxybrevianamide, also called notoamide S. As the proposed pivotal branching point in notoamide biosynthesis, notoamide S can be diverted to notoamide E through an oxidative pyran ring closure putatively catalyzed by either notH' cytochrome P450 monooxygenase or the notD' FAD-linked oxidoreductase. This step would be followed by an indole 2,3-epoxidation-initiated pinacol-like rearrangement catalyzed by the notB' FAD-dependent monooxygenase leading to the formation of notoamide C and notoamide D. On the other hand notoamide S is converted to notoamide T by notH' (or notD'), a bifunctional oxidase that also functions as the intramolecular Diels-Alderase responsible for generation of (-)-notoamide T. To generate antipodal (+)-notoaminide T, notH (or notD) in Aspergillus strain MF297-2 is expected to catalyze a Diels-Alder reaction leading to the opposite stereochemistry. The remaining oxidoreductase notD' (or notH') likely catalyzes the oxidative pyran ring formation to yield (-)-stephacidin A. The FAD-dependent monooxygenase notI' is highly similar to notB' and is predicted to catalyze a similar conversion from (-)-stephacidin A to (+)-notoamide B via the 2,3-epoxidation of (-)-stephacidin A followed by a pinacol-type rearrangement. Finally, it remains unclear which enzyme could be responsible for the final hydroxylation steps leading to notoamide A and sclerotiamide. The chain is 6-Hydroxy-7-prenyldeoxybrevianamide E synthase notC' from Aspergillus versicolor.